Consider the following 120-residue polypeptide: NAD(P)H-quinone oxidoreductase subunit 3 (120 aa).

3 helical membrane-spanning segments follow: residues 10–32 (LLGF…KVLR), 64–84 (MFAL…PWAV), and 89–109 (LGVL…VGLV).

This sequence belongs to the complex I subunit 3 family. In terms of assembly, NDH-1 can be composed of about 15 different subunits; different subcomplexes with different compositions have been identified which probably have different functions.

The protein localises to the cellular thylakoid membrane. The catalysed reaction is a plastoquinone + NADH + (n+1) H(+)(in) = a plastoquinol + NAD(+) + n H(+)(out). It catalyses the reaction a plastoquinone + NADPH + (n+1) H(+)(in) = a plastoquinol + NADP(+) + n H(+)(out). In terms of biological role, NDH-1 shuttles electrons from an unknown electron donor, via FMN and iron-sulfur (Fe-S) centers, to quinones in the respiratory and/or the photosynthetic chain. The immediate electron acceptor for the enzyme in this species is believed to be plastoquinone. Couples the redox reaction to proton translocation, and thus conserves the redox energy in a proton gradient. Cyanobacterial NDH-1 also plays a role in inorganic carbon-concentration. This chain is NAD(P)H-quinone oxidoreductase subunit 3, found in Acaryochloris marina (strain MBIC 11017).